The primary structure comprises 140 residues: 3-hydroxyacyl-[acyl-carrier-protein] dehydratase FabZ (140 aa).

The active site involves H47.

Belongs to the thioester dehydratase family. FabZ subfamily.

It is found in the cytoplasm. The enzyme catalyses a (3R)-hydroxyacyl-[ACP] = a (2E)-enoyl-[ACP] + H2O. Its function is as follows. Involved in unsaturated fatty acids biosynthesis. Catalyzes the dehydration of short chain beta-hydroxyacyl-ACPs and long chain saturated and unsaturated beta-hydroxyacyl-ACPs. In Streptococcus pneumoniae (strain CGSP14), this protein is 3-hydroxyacyl-[acyl-carrier-protein] dehydratase FabZ.